The following is a 370-amino-acid chain: tRNA-specific 2-thiouridylase MnmA 1 (370 aa).

Residues glycine 9–serine 16 and methionine 35 each bind ATP. Residues asparagine 95–aspartate 97 form an interaction with target base in tRNA region. The active-site Nucleophile is the cysteine 100. Cysteine 100 and cysteine 196 are oxidised to a cystine. Residue glycine 124 participates in ATP binding. The interaction with tRNA stretch occupies residues lysine 146–glutamine 148. Cysteine 196 acts as the Cysteine persulfide intermediate in catalysis. The interaction with tRNA stretch occupies residues arginine 306–tyrosine 307.

Belongs to the MnmA/TRMU family.

The protein localises to the cytoplasm. The catalysed reaction is S-sulfanyl-L-cysteinyl-[protein] + uridine(34) in tRNA + AH2 + ATP = 2-thiouridine(34) in tRNA + L-cysteinyl-[protein] + A + AMP + diphosphate + H(+). Its function is as follows. Catalyzes the 2-thiolation of uridine at the wobble position (U34) of tRNA, leading to the formation of s(2)U34. The polypeptide is tRNA-specific 2-thiouridylase MnmA 1 (Geobacillus kaustophilus (strain HTA426)).